The chain runs to 565 residues: Acyl-CoA ligase easD (565 aa).

ATP-binding positions include 213–221 (TSGTSGKQK), 354–359 (HAYGLT), Asp438, Arg457, and Lys555. Residues 284-354 (DMQLMLKTIE…KLRPTWKINH (71 aa)) form an SBD1 region. Residues 355–417 (AYGLTETGVV…FNSPSCFLGY (63 aa)) are SBD2.

Belongs to the ATP-dependent AMP-binding enzyme family.

It participates in antibiotic biosynthesis. Acyl-CoA ligase; part of the gene cluster that mediates the biosynthesis of emericellamides, secondary metabolites acting as antibiotics. The biosynthesis of emericellamides initiates from the highly reducing polyketide synthase easB which catalyzes the formation of the linear polyketide chain. EasB produces several polyketides that can be further processed by the downstream enzymes. The polyketides are released from easB as linear polyketide carboxylic acids, which are converted to CoA thioesters by the acyl-CoA ligase easD. The substrates are then loaded onto the acyltransferase easC, which shuttles them to the first thiolation (T) domain of the nonribosomal peptide synthetase easA. EasA then performs condensation of the polyketides with one glycine, two alanine, one valine and one leucine residues. A last step of cyclization leads to the production of emericellamides. This is Acyl-CoA ligase easD from Emericella nidulans (strain FGSC A4 / ATCC 38163 / CBS 112.46 / NRRL 194 / M139) (Aspergillus nidulans).